We begin with the raw amino-acid sequence, 303 residues long: Aspartate carbamoyltransferase catalytic subunit (303 aa).

Carbamoyl phosphate is bound by residues Arg-54 and Thr-55. Lys-82 serves as a coordination point for L-aspartate. Carbamoyl phosphate is bound by residues Arg-104, His-132, and Gln-135. The L-aspartate site is built by Arg-165 and Arg-221. Positions 261 and 262 each coordinate carbamoyl phosphate.

It belongs to the aspartate/ornithine carbamoyltransferase superfamily. ATCase family. In terms of assembly, heterododecamer (2C3:3R2) of six catalytic PyrB chains organized as two trimers (C3), and six regulatory PyrI chains organized as three dimers (R2).

The enzyme catalyses carbamoyl phosphate + L-aspartate = N-carbamoyl-L-aspartate + phosphate + H(+). Its pathway is pyrimidine metabolism; UMP biosynthesis via de novo pathway; (S)-dihydroorotate from bicarbonate: step 2/3. In terms of biological role, catalyzes the condensation of carbamoyl phosphate and aspartate to form carbamoyl aspartate and inorganic phosphate, the committed step in the de novo pyrimidine nucleotide biosynthesis pathway. This chain is Aspartate carbamoyltransferase catalytic subunit, found in Koribacter versatilis (strain Ellin345).